The sequence spans 148 residues: Transcriptional regulator MraZ (148 aa).

SpoVT-AbrB domains are found at residues 5-51 (AAAL…PSPA) and 80-123 (ARTE…SEAG).

Belongs to the MraZ family. As to quaternary structure, forms oligomers.

It is found in the cytoplasm. The protein resides in the nucleoid. The polypeptide is Transcriptional regulator MraZ (Dechloromonas aromatica (strain RCB)).